Reading from the N-terminus, the 1187-residue chain is ATP-dependent DNA helicase MPH1 (1187 aa).

Positions 144-311 (IVERAFYDNL…QIIDNLNISK (168 aa)) constitute a Helicase ATP-binding domain. Residue 157-164 (LPTGLGKT) coordinates ATP. The short motif at 259-262 (DEAH) is the DEAH box element. The Helicase C-terminal domain occupies 486–681 (ELDDFFKNHE…FIQLRPQHRM (196 aa)). Disordered regions lie at residues 542–576 (VENF…MTGM), 781–848 (DKLV…NNQV), and 941–1003 (PEKP…LGVK). The span at 547-556 (KKKQKGQTKK) shows a compositional bias: basic residues. Polar residues predominate over residues 564 to 576 (TRSSSENAQMTGM). Basic and acidic residues predominate over residues 781–817 (DKLVDSDSESEVDKENENVIQEVDKSKNQEQNDHIIT). Residues 822–848 (TEQSVAGNTKSTTNGTSYSEPENNNQV) show a composition bias toward polar residues. The segment covering 967 to 977 (SNSISIPSSTT) has biased composition (low complexity). Residues 980 to 989 (SHNEVTRKVV) show a composition bias toward basic and acidic residues.

It belongs to the DEAD box helicase family. DEAH subfamily. FANCM sub-subfamily. In terms of assembly, interacts with the MHF histone-fold complex to form the FANCM-MHF complex.

The protein localises to the nucleus. It catalyses the reaction ATP + H2O = ADP + phosphate + H(+). In terms of biological role, ATP-dependent DNA helicase involved in DNA damage repair by homologous recombination and in genome maintenance. Capable of unwinding D-loops. Plays a role in limiting crossover recombinants during mitotic DNA double-strand break (DSB) repair. Component of a FANCM-MHF complex which promotes gene conversion at blocked replication forks, probably by reversal of the stalled fork. The sequence is that of ATP-dependent DNA helicase MPH1 from Candida albicans (strain SC5314 / ATCC MYA-2876) (Yeast).